We begin with the raw amino-acid sequence, 232 residues long: Triosephosphate isomerase (232 aa).

Position 6-8 (6-8 (NLK)) interacts with substrate. H91 (electrophile) is an active-site residue. Residue E158 is the Proton acceptor of the active site. The substrate site is built by G164 and S194.

Belongs to the triosephosphate isomerase family. In terms of assembly, homodimer.

It is found in the cytoplasm. It catalyses the reaction D-glyceraldehyde 3-phosphate = dihydroxyacetone phosphate. The protein operates within carbohydrate biosynthesis; gluconeogenesis. It participates in carbohydrate degradation; glycolysis; D-glyceraldehyde 3-phosphate from glycerone phosphate: step 1/1. Its function is as follows. Involved in the gluconeogenesis. Catalyzes stereospecifically the conversion of dihydroxyacetone phosphate (DHAP) to D-glyceraldehyde-3-phosphate (G3P). The chain is Triosephosphate isomerase from Campylobacter hominis (strain ATCC BAA-381 / DSM 21671 / CCUG 45161 / LMG 19568 / NCTC 13146 / CH001A).